The sequence spans 196 residues: UMP-CMP kinase (196 aa).

13-18 serves as a coordination point for ATP; it reads GAGKGT. An NMP region spans residues 33–63; the sequence is SAGDLLRDERKKPDSQYGELIESYIRDGRIV. A ribonucleoside 5'-phosphate is bound by residues arginine 39, 61 to 63, and 93 to 96; these read RIV and GFPR. Asparagine 100 contacts CMP. Residues 133 to 143 are LID; sequence ERGKSSGRSDD. Position 134 (arginine 134) interacts with ATP. The a ribonucleoside 5'-phosphate site is built by arginine 140 and arginine 151. Residue lysine 179 coordinates ATP.

The protein belongs to the adenylate kinase family. UMP-CMP kinase subfamily. In terms of assembly, monomer. Requires Mg(2+) as cofactor.

The protein localises to the cytoplasm. Its subcellular location is the nucleus. The catalysed reaction is CMP + ATP = CDP + ADP. It carries out the reaction dCMP + ATP = dCDP + ADP. The enzyme catalyses UMP + ATP = UDP + ADP. It catalyses the reaction a 2'-deoxyribonucleoside 5'-diphosphate + ATP = a 2'-deoxyribonucleoside 5'-triphosphate + ADP. The catalysed reaction is a ribonucleoside 5'-diphosphate + ATP = a ribonucleoside 5'-triphosphate + ADP. In terms of biological role, catalyzes the phosphorylation of pyrimidine nucleoside monophosphates at the expense of ATP. Plays an important role in de novo pyrimidine nucleotide biosynthesis. Has preference for UMP and CMP as phosphate acceptors. Also displays broad nucleoside diphosphate kinase activity. The sequence is that of UMP-CMP kinase (cmpk1) from Xenopus tropicalis (Western clawed frog).